The primary structure comprises 180 residues: Uterocalin (180 aa).

The first 18 residues, 1 to 18 (MNLLLLAMGLILPRRPHA), serve as a signal peptide directing secretion. An intrachain disulfide couples Cys82 to Cys175. Residue Asn101 is glycosylated (N-linked (GlcNAc...) asparagine).

The protein belongs to the calycin superfamily. Lipocalin family. Expressed in glandular and lumenal epithelia of the endometrium. Is transferred to the embryonic capsule, the conceptus and the yolk sac.

The protein localises to the secreted. Functionally, binds fatty acids and retinol. Is specialized for the preattachment embryo. May be important to maintain the pregnancy and may transport small hydrophobic ligands from mother to the developing embryo. The polypeptide is Uterocalin (Equus caballus (Horse)).